Here is a 559-residue protein sequence, read N- to C-terminus: NXPE family member 3 (559 aa).

The first 30 residues, methionine 1 to valine 30, serve as a signal peptide directing secretion. 3 N-linked (GlcNAc...) asparagine glycosylation sites follow: asparagine 26, asparagine 237, and asparagine 346.

It belongs to the NXPE family.

Its subcellular location is the secreted. The chain is NXPE family member 3 (NXPE3) from Pongo abelii (Sumatran orangutan).